A 478-amino-acid polypeptide reads, in one-letter code: Putative L-amino-acid oxidase YobN (478 aa).

FAD contacts are provided by residues Ser-34, Glu-53, Arg-61, and 80 to 81 (MR). Residues Arg-81 and Tyr-369 each coordinate substrate. Residues Glu-451 and 460-463 (MQGA) each bind FAD.

Belongs to the flavin monoamine oxidase family. FIG1 subfamily. Requires FAD as cofactor.

The catalysed reaction is an L-alpha-amino acid + O2 + H2O = a 2-oxocarboxylate + H2O2 + NH4(+). The protein is Putative L-amino-acid oxidase YobN (yobN) of Bacillus subtilis (strain 168).